The sequence spans 59 residues: Large ribosomal subunit protein bL33 (59 aa).

Positions Arg-26–Lys-59 are disordered.

It belongs to the bacterial ribosomal protein bL33 family.

The protein is Large ribosomal subunit protein bL33 of Chlorobium phaeobacteroides (strain BS1).